Reading from the N-terminus, the 72-residue chain is Translation initiation factor IF-1 1 (72 aa).

The S1-like domain maps to 1-72 (MAKEDRIEMQ…SRARIIFRAK (72 aa)).

This sequence belongs to the IF-1 family. Component of the 30S ribosomal translation pre-initiation complex which assembles on the 30S ribosome in the order IF-2 and IF-3, IF-1 and N-formylmethionyl-tRNA(fMet); mRNA recruitment can occur at any time during PIC assembly.

The protein resides in the cytoplasm. In terms of biological role, one of the essential components for the initiation of protein synthesis. Stabilizes the binding of IF-2 and IF-3 on the 30S subunit to which N-formylmethionyl-tRNA(fMet) subsequently binds. Helps modulate mRNA selection, yielding the 30S pre-initiation complex (PIC). Upon addition of the 50S ribosomal subunit IF-1, IF-2 and IF-3 are released leaving the mature 70S translation initiation complex. In Methylobacillus flagellatus (strain ATCC 51484 / DSM 6875 / VKM B-1610 / KT), this protein is Translation initiation factor IF-1 1.